Reading from the N-terminus, the 253-residue chain is Small ribosomal subunit protein uS2 (253 aa).

This sequence belongs to the universal ribosomal protein uS2 family.

This is Small ribosomal subunit protein uS2 from Cereibacter sphaeroides (strain ATCC 17023 / DSM 158 / JCM 6121 / CCUG 31486 / LMG 2827 / NBRC 12203 / NCIMB 8253 / ATH 2.4.1.) (Rhodobacter sphaeroides).